Reading from the N-terminus, the 136-residue chain is Group 1 truncated hemoglobin GlbN (136 aa).

His81 serves as a coordination point for heme.

This sequence belongs to the truncated hemoglobin family. Group I subfamily. Homodimer. Heme serves as cofactor.

Binds oxygen cooperatively with very high affinity because of a fast combination and a slow dissociation rate. The polypeptide is Group 1 truncated hemoglobin GlbN (glbN) (Mycolicibacterium paratuberculosis (strain ATCC BAA-968 / K-10) (Mycobacterium paratuberculosis)).